The sequence spans 999 residues: Cytoplasmic dynein 2 intermediate chain 1 (999 aa).

Basic and acidic residues-rich tracts occupy residues 1–19 (MEPGKRRTKDDTWKADDLR), 29–138 (PKEE…EEIR), 146–260 (LLSR…EDRH), and 268–300 (GLHYDDERRRSHADKKERSSKEEHKKRELKELE). The tract at residues 1 to 350 (MEPGKRRTKD…EHEAREKAEE (350 aa)) is disordered. At Ser-250 the chain carries Phosphoserine. Residues 318–338 (LEDDFVDYEDDFEVCDGDDDS) show a composition bias toward acidic residues. A compositionally biased stretch (basic and acidic residues) spans 339–350 (NNEHEAREKAEE). Residues 416 to 495 (ASHRQKSRSQ…DIQTEDIETR (80 aa)) are binding to the DYNLT2B-DYNLT1/DYNLT3 dimer. WD repeat units follow at residues 637–677 (ICES…RIHH), 718–764 (AYKK…KADI), 850–890 (VRPI…PIMQ), and 895–935 (TSGH…LGPV).

This sequence belongs to the dynein light intermediate chain family. In terms of assembly, intermediate chain of the cytoplasmic dynein complex 2, a multisubunit complex, composed at least of eleven different proteins. The cytoplasmic dynein 2 complex consists of two catalytic heavy chains (HCs) and a number of non-catalytic subunits presented by intermediate chains (ICs), light intermediate chains (LICs) and light chains (LCs). Among them, a heavy chain (DYNC2H1), two intermediate chains (DYNC2I2 and DYNC2I1), a light intermediate chain (DYNC2LI1), and a light chain (DYNLT2B) are unique to the cytoplasmic dynein complex 2, but a subset of the light chains are also shared by dynein-1 and dynein-2 complexes. Interacts with DYNC2I2; their C-terminal domains each bind a copy of the heavy chain, and their extended N-terminal regions are held together by an array of light chain dimers. Interacts with DYNLT2B. Interacts (via the N-terminal half) with DYNLT2B-DYNLT1 dimer or with DYNLT2B-DYNLT3 dimer; this interaction is crucial for retrograde trafficking of ciliary proteins.

It localises to the cell projection. The protein localises to the cilium. Its subcellular location is the cytoplasm. The protein resides in the cytoskeleton. It is found in the microtubule organizing center. It localises to the centrosome. Acts as one of several non-catalytic accessory components of the cytoplasmic dynein 2 complex (dynein-2 complex), a motor protein complex that drives the movement of cargos along microtubules within cilia and flagella in concert with the intraflagellar transport (IFT) system. DYNC2I1 plays a major role in retrograde ciliary protein trafficking in cilia and flagella. Also requires to maintain a functional transition zone. The protein is Cytoplasmic dynein 2 intermediate chain 1 (Dync2i1) of Mus musculus (Mouse).